The sequence spans 309 residues: S-antigen protein (309 aa).

Positions 1–23 (MNRILSVSFYLFFLYLYIYKTYG) are cleaved as a signal peptide. Positions 52-309 (GKGNKYEDLQ…KSIMNMLILM (258 aa)) are disordered. Positions 60 to 86 (LQEEGEGENDDEEHSNSEESDNDEENE) are enriched in acidic residues. Over residues 93-259 (EAPKSDEAEA…DEAEARKSEA (167 aa)) the composition is skewed to basic and acidic residues. Residues 97–256 (SDEAEALKSD…RKSDEAEARK (160 aa)) form a 20 X 8 AA approximate tandem repeats of A-[RL]-K-S-D-E-A-E region. 2 tandem repeats follow at residues 257–271 (SEAGTEGPKGTGGPG) and 272–286 (SEAGTEGPKGTGGPG). The interval 257 to 286 (SEAGTEGPKGTGGPGSEAGTEGPKGTGGPG) is 2 X 15 AA tandem repeats of S-E-A-G-T-E-G-P-K-G-T-G-G-P-G. The segment covering 263–289 (GPKGTGGPGSEAGTEGPKGTGGPGSGG) has biased composition (gly residues).

Its subcellular location is the parasitophorous vacuole. Functionally, s antigens are soluble heat-stable proteins present in the sera of some infected individuals. The polypeptide is S-antigen protein (Plasmodium falciparum (isolate NF7 / Ghana)).